A 222-amino-acid polypeptide reads, in one-letter code: Sigma non-opioid intracellular receptor 1 (222 aa).

The Lumenal segment spans residues Met-1–Trp-7. A helical transmembrane segment spans residues Val-8–Leu-29. Over Ala-30–Cys-222 the chain is Cytoplasmic. The interval Ser-98–Leu-105 is important for ligand-binding. Residues Phe-176–Cys-222 form a C-terminal hydrophobic region region.

It belongs to the ERG2 family. As to quaternary structure, homotrimer.

The protein resides in the nucleus inner membrane. It is found in the nucleus outer membrane. The protein localises to the nucleus envelope. It localises to the cytoplasmic vesicle. Its subcellular location is the endoplasmic reticulum membrane. The protein resides in the membrane. May function in lipid transport from the endoplasmic reticulum and be involved in a wide array of cellular functions probably through regulation of the biogenesis of lipid microdomains at the plasma membrane. May regulate calcium efflux at the endoplasmic reticulum. The protein is Sigma non-opioid intracellular receptor 1 (SIGMAR1) of Gallus gallus (Chicken).